Here is a 61-residue protein sequence, read N- to C-terminus: MAKKALVNKAARKPKFTVRGYTRCSKCGRPRAVFRKFGLCRICLREMAHAGELPGVQKSSW.

Positions 24, 27, 40, and 43 each coordinate Zn(2+).

It belongs to the universal ribosomal protein uS14 family. Zinc-binding uS14 subfamily. Part of the 30S ribosomal subunit. Contacts proteins S3 and S10. The cofactor is Zn(2+).

Its function is as follows. Binds 16S rRNA, required for the assembly of 30S particles and may also be responsible for determining the conformation of the 16S rRNA at the A site. The chain is Small ribosomal subunit protein uS14 from Mycobacterium leprae (strain Br4923).